Here is a 63-residue protein sequence, read N- to C-terminus: Hypoxia-inducible lipid droplet-associated protein (63 aa).

The tract at residues 1 to 37 is required for targeting to lipid droplets; the sequence is MKHVLNLYLLGVVLTLLSIFVRVMESLEGLLESPSPG. Residues 7–23 form a helical membrane-spanning segment; the sequence is LYLLGVVLTLLSIFVRV. The segment at 31 to 63 is disordered; the sequence is LESPSPGTSWTTRSQLANTEPTKGLPDHPSRSM. A compositionally biased stretch (polar residues) spans 35 to 51; sequence SPGTSWTTRSQLANTEP. Ser44 carries the phosphoserine modification.

In terms of tissue distribution, highly expressed in renal cell carcinoma cells but barely detectable in adjacent normal kidney tissue. Detected in some cervical and endometrial cancers. Expression also detected in fetal kidney with little or no expression observed in normal adult heart, liver, lung, pancreas, prostate or spinal cord (at protein level).

It localises to the lipid droplet. The protein localises to the secreted. It is found in the membrane. Functionally, increases intracellular lipid accumulation. Stimulates expression of cytokines including IL6, MIF and VEGFA. Enhances cell growth and proliferation. The sequence is that of Hypoxia-inducible lipid droplet-associated protein (HILPDA) from Homo sapiens (Human).